The chain runs to 172 residues: Putative defense protein (172 aa).

An N-terminal signal peptide occupies residues 1-21 (MKLVVAAVLAMAASRWRRLSA). A Reelin domain is found at 22–172 (HGQVPSSTCA…LRQLDNAVAA (151 aa)).

It belongs to the insect defense protein family. In terms of tissue distribution, in adults, in hemolymph.

The protein resides in the secreted. May have antimicrobial activity. The polypeptide is Putative defense protein (Locusta migratoria (Migratory locust)).